Reading from the N-terminus, the 577-residue chain is Calcium-dependent protein kinase 22 (577 aa).

A lipid anchor (N-myristoyl glycine) is attached at glycine 2. Residues 105–368 enclose the Protein kinase domain; it reads YRLGAELGRG…AKEVLEHPWL (264 aa). Residues 111–119 and lysine 134 contribute to the ATP site; that span reads LGRGEFGVT. Catalysis depends on aspartate 234, which acts as the Proton acceptor. An autoinhibitory domain region spans residues 374–404; it reads APNVSLGEIVRSRLMQFSAMNKFKKKALGVV. EF-hand domains are found at residues 411 to 446, 447 to 482, 483 to 518, and 520 to 553; these read EEMD…NGHP, VPET…IKKM, SNEE…ELGP, and EQVV…GSDW. Ca(2+) contacts are provided by aspartate 424, aspartate 426, serine 428, asparagine 430, aspartate 435, aspartate 460, aspartate 462, asparagine 464, threonine 466, glutamate 471, aspartate 496, aspartate 498, asparagine 500, glutamate 507, aspartate 531, aspartate 533, aspartate 535, arginine 537, and glutamate 542.

Belongs to the protein kinase superfamily. Ser/Thr protein kinase family. CDPK subfamily.

The protein resides in the membrane. The catalysed reaction is L-seryl-[protein] + ATP = O-phospho-L-seryl-[protein] + ADP + H(+). The enzyme catalyses L-threonyl-[protein] + ATP = O-phospho-L-threonyl-[protein] + ADP + H(+). Its activity is regulated as follows. Activated by calcium. Autophosphorylation may play an important role in the regulation of the kinase activity. Functionally, may play a role in signal transduction pathways that involve calcium as a second messenger. This is Calcium-dependent protein kinase 22 from Oryza sativa subsp. japonica (Rice).